A 214-amino-acid chain; its full sequence is Phosphatidylserine decarboxylase proenzyme (214 aa).

Catalysis depends on Ser183, which acts as the Schiff-base intermediate with substrate; via pyruvic acid. A Pyruvic acid (Ser); by autocatalysis modification is found at Ser183.

The protein belongs to the phosphatidylserine decarboxylase family. PSD-A subfamily. As to quaternary structure, heterodimer of a large membrane-associated beta subunit and a small pyruvoyl-containing alpha subunit. Pyruvate is required as a cofactor. Post-translationally, is synthesized initially as an inactive proenzyme. Formation of the active enzyme involves a self-maturation process in which the active site pyruvoyl group is generated from an internal serine residue via an autocatalytic post-translational modification. Two non-identical subunits are generated from the proenzyme in this reaction, and the pyruvate is formed at the N-terminus of the alpha chain, which is derived from the carboxyl end of the proenzyme. The post-translation cleavage follows an unusual pathway, termed non-hydrolytic serinolysis, in which the side chain hydroxyl group of the serine supplies its oxygen atom to form the C-terminus of the beta chain, while the remainder of the serine residue undergoes an oxidative deamination to produce ammonia and the pyruvoyl prosthetic group on the alpha chain.

The protein resides in the cell membrane. The catalysed reaction is a 1,2-diacyl-sn-glycero-3-phospho-L-serine + H(+) = a 1,2-diacyl-sn-glycero-3-phosphoethanolamine + CO2. It functions in the pathway phospholipid metabolism; phosphatidylethanolamine biosynthesis; phosphatidylethanolamine from CDP-diacylglycerol: step 2/2. Its function is as follows. Catalyzes the formation of phosphatidylethanolamine (PtdEtn) from phosphatidylserine (PtdSer). The protein is Phosphatidylserine decarboxylase proenzyme of Chlorobaculum parvum (strain DSM 263 / NCIMB 8327) (Chlorobium vibrioforme subsp. thiosulfatophilum).